The following is a 140-amino-acid chain: Zinc finger SWIM domain-containing protein 7 (140 aa).

The segment at 76-114 adopts an SWIM-type zinc-finger fold; sequence YTCFTSCHYCPCPAFSFTVLRRNESLMCKHLLAVILSQA.

The protein belongs to the SWS1 family.

It localises to the nucleus. Its function is as follows. Involved in early stages of the homologous recombination repair (HRR) pathway of double-stranded DNA breaks arising during DNA replication or induced by DNA-damaging agents. The protein is Zinc finger SWIM domain-containing protein 7 (zswim7) of Danio rerio (Zebrafish).